The sequence spans 431 residues: Mevalonate kinase (431 aa).

ATP is bound by residues Lys13, Ser139, and 144-150 (GAGLGSS). Residues Ser150 and Glu198 each contribute to the Mg(2+) site. Asp209 (proton acceptor) is an active-site residue.

It belongs to the GHMP kinase family. Mevalonate kinase subfamily. In terms of assembly, homodimer.

It localises to the cytoplasm. The protein resides in the cytosol. The enzyme catalyses (R)-mevalonate + ATP = (R)-5-phosphomevalonate + ADP + H(+). It functions in the pathway isoprenoid biosynthesis; isopentenyl diphosphate biosynthesis via mevalonate pathway; isopentenyl diphosphate from (R)-mevalonate: step 1/3. Mevalonate kinase; part of the second module of ergosterol biosynthesis pathway that includes the middle steps of the pathway. ERG12 converts mevalonate into 5-phosphomevalonate. The second module is carried out in the vacuole and involves the formation of farnesyl diphosphate, which is also an important intermediate in the biosynthesis of ubiquinone, dolichol, heme and prenylated proteins. Activity by the mevalonate kinase ERG12 first converts mevalonate into 5-phosphomevalonate. 5-phosphomevalonate is then further converted to 5-diphosphomevalonate by the phosphomevalonate kinase ERG8. The diphosphomevalonate decarboxylase MVD then produces isopentenyl diphosphate. The isopentenyl-diphosphate delta-isomerase IDI1 then catalyzes the 1,3-allylic rearrangement of the homoallylic substrate isopentenyl (IPP) to its highly electrophilic allylic isomer, dimethylallyl diphosphate (DMAPP). Finally the farnesyl diphosphate synthase ERG20 catalyzes the sequential condensation of isopentenyl pyrophosphate with dimethylallyl pyrophosphate, and then with the resultant geranylpyrophosphate to the ultimate product farnesyl pyrophosphate. This chain is Mevalonate kinase, found in Candida albicans (strain SC5314 / ATCC MYA-2876) (Yeast).